Here is a 317-residue protein sequence, read N- to C-terminus: Methionyl-tRNA formyltransferase (317 aa).

Ser109–Pro112 contributes to the (6S)-5,6,7,8-tetrahydrofolate binding site.

The protein belongs to the Fmt family.

It catalyses the reaction L-methionyl-tRNA(fMet) + (6R)-10-formyltetrahydrofolate = N-formyl-L-methionyl-tRNA(fMet) + (6S)-5,6,7,8-tetrahydrofolate + H(+). In terms of biological role, attaches a formyl group to the free amino group of methionyl-tRNA(fMet). The formyl group appears to play a dual role in the initiator identity of N-formylmethionyl-tRNA by promoting its recognition by IF2 and preventing the misappropriation of this tRNA by the elongation apparatus. This is Methionyl-tRNA formyltransferase from Halalkalibacterium halodurans (strain ATCC BAA-125 / DSM 18197 / FERM 7344 / JCM 9153 / C-125) (Bacillus halodurans).